The primary structure comprises 172 residues: Cytidylate kinase (172 aa).

7 to 15 contacts ATP; that stretch reads GLAGTGTTT.

It belongs to the cytidylate kinase family. Type 2 subfamily.

Its subcellular location is the cytoplasm. The enzyme catalyses CMP + ATP = CDP + ADP. The catalysed reaction is dCMP + ATP = dCDP + ADP. The chain is Cytidylate kinase from Methanobrevibacter smithii (strain ATCC 35061 / DSM 861 / OCM 144 / PS).